The primary structure comprises 93 residues: Small ribosomal subunit protein bS18 (93 aa).

This sequence belongs to the bacterial ribosomal protein bS18 family. As to quaternary structure, part of the 30S ribosomal subunit. Forms a tight heterodimer with protein bS6.

Its function is as follows. Binds as a heterodimer with protein bS6 to the central domain of the 16S rRNA, where it helps stabilize the platform of the 30S subunit. The polypeptide is Small ribosomal subunit protein bS18 (Verminephrobacter eiseniae (strain EF01-2)).